The following is a 295-amino-acid chain: Secreted frizzled-related protein 2 (295 aa).

The signal sequence occupies residues 1 to 24; it reads MPRGPASLLLLVLASHCCLGSARG. Residues 35 to 155 enclose the FZ domain; it reads YKRSNCKPIP…PQDNDLCIPL (121 aa). 8 disulfides stabilise this stretch: Cys-40/Cys-103, Cys-50/Cys-96, Cys-87/Cys-125, Cys-114/Cys-152, Cys-118/Cys-142, Cys-172/Cys-245, Cys-175/Cys-247, and Cys-190/Cys-295. In terms of domain architecture, NTR spans 172–295; that stretch reads CEACKTKNED…ISRSIRKLQC (124 aa).

The protein belongs to the secreted frizzled-related protein (sFRP) family. Highly expressed in the eye. Weaker expression in heart and lung.

It is found in the secreted. Soluble frizzled-related proteins (sFRPS) function as modulators of Wnt signaling through direct interaction with Wnts. They have a role in regulating cell growth and differentiation in specific cell types. SFRP2 may be important for eye retinal development and for myogenesis. The polypeptide is Secreted frizzled-related protein 2 (Mus musculus (Mouse)).